Consider the following 437-residue polypeptide: Epsilon-sarcoglycan (437 aa).

At 1–317 (MQLPRWWELG…LKSRDYYTDF (317 aa)) the chain is on the extracellular side. Asparagine 200 carries N-linked (GlcNAc...) asparagine glycosylation. Residues 318–338 (LITLAVPSAVALVLFLILAYI) form a helical membrane-spanning segment. At 339-437 (MCCRREGVEK…QQQTTGKWYP (99 aa)) the chain is on the cytoplasmic side.

It belongs to the sarcoglycan alpha/epsilon family. In terms of processing, N-glycosylated. Post-translationally, ubiquitinated, leading to its degradation by the proteasome.

It localises to the cell membrane. It is found in the sarcolemma. Its subcellular location is the cytoplasm. The protein resides in the cytoskeleton. The protein localises to the cell projection. It localises to the dendrite. It is found in the golgi apparatus. Component of the sarcoglycan complex, a subcomplex of the dystrophin-glycoprotein complex which forms a link between the F-actin cytoskeleton and the extracellular matrix. The polypeptide is Epsilon-sarcoglycan (Macaca fascicularis (Crab-eating macaque)).